The following is a 218-amino-acid chain: Oocyte-specific homeobox protein 7 (218 aa).

The segment covering S40–S72 has biased composition (polar residues). The disordered stretch occupies residues S40 to L77. A DNA-binding region (homeobox) is located at residues F94 to N153.

Belongs to the paired homeobox family. Obox subfamily. As to expression, specifically expressed in oocytes and early embryos.

The protein resides in the nucleus. In terms of biological role, transcription factor required for zygotic genome activation (ZGA), a critical event in early embryonic development during which the developmental control passes from maternally provided mRNAs to the expression of the zygotic genome after fertilization. Together with other Obox family members, required in early two-cell stage embryos to kick-start the major ZGA wave by facilitating RNA Polymerase II 'pre-configuration', during which RNA Polymerase II relocates from the initial one-cell stage binding targets to ZGA gene promoters and distal enhancers. Mechanistically, promotes recruitment of RNA Polymerase II from (CG-rich) non-ZGA genes to (CG-poor) ZGA genes at the two-cell stage. Binds to regulatory DNA sequences containing a 5'-ACNCCTTTAATCCCAG-3' sequence motif. Most maternal and zygotic Obox family proteins can compensate for one another. The polypeptide is Oocyte-specific homeobox protein 7 (Mus musculus (Mouse)).